The following is a 346-amino-acid chain: Probable RNA methyltransferase PA14_40730 (346 aa).

Glu91 acts as the Proton acceptor in catalysis. The 227-residue stretch at 94-320 (LLPRGGLCVS…TKVRNSAGQD (227 aa)) folds into the Radical SAM core domain. Cys101 and Cys325 are joined by a disulfide. Cys108, Cys112, and Cys115 together coordinate [4Fe-4S] cluster. Residues 153-154 (GE), Ser183, 206-208 (SLH), and Asn282 each bind S-adenosyl-L-methionine. Cys325 functions as the S-methylcysteine intermediate in the catalytic mechanism.

Belongs to the radical SAM superfamily. RlmN family. [4Fe-4S] cluster is required as a cofactor.

The protein localises to the cytoplasm. The chain is Probable RNA methyltransferase PA14_40730 from Pseudomonas aeruginosa (strain UCBPP-PA14).